The following is a 239-amino-acid chain: Ditrans,polycis-undecaprenyl-diphosphate synthase ((2E,6E)-farnesyl-diphosphate specific) (239 aa).

Residue Asp18 is part of the active site. Asp18 contributes to the Mg(2+) binding site. Residues 19–22 (GNGR), Trp23, Arg31, His35, and 63–65 (SSE) contribute to the substrate site. The Proton acceptor role is filled by Asn66. Substrate is bound by residues Trp67, Arg69, Arg186, and 192-194 (RIS). Glu205 contacts Mg(2+).

The protein belongs to the UPP synthase family. In terms of assembly, homodimer. The cofactor is Mg(2+).

The enzyme catalyses 8 isopentenyl diphosphate + (2E,6E)-farnesyl diphosphate = di-trans,octa-cis-undecaprenyl diphosphate + 8 diphosphate. Functionally, catalyzes the sequential condensation of isopentenyl diphosphate (IPP) with (2E,6E)-farnesyl diphosphate (E,E-FPP) to yield (2Z,6Z,10Z,14Z,18Z,22Z,26Z,30Z,34E,38E)-undecaprenyl diphosphate (di-trans,octa-cis-UPP). UPP is the precursor of glycosyl carrier lipid in the biosynthesis of bacterial cell wall polysaccharide components such as peptidoglycan and lipopolysaccharide. In Haemophilus influenzae (strain ATCC 51907 / DSM 11121 / KW20 / Rd), this protein is Ditrans,polycis-undecaprenyl-diphosphate synthase ((2E,6E)-farnesyl-diphosphate specific).